The chain runs to 185 residues: Elongation factor P (185 aa).

It belongs to the elongation factor P family.

It localises to the cytoplasm. Its pathway is protein biosynthesis; polypeptide chain elongation. Involved in peptide bond synthesis. Stimulates efficient translation and peptide-bond synthesis on native or reconstituted 70S ribosomes in vitro. Probably functions indirectly by altering the affinity of the ribosome for aminoacyl-tRNA, thus increasing their reactivity as acceptors for peptidyl transferase. In Caldicellulosiruptor saccharolyticus (strain ATCC 43494 / DSM 8903 / Tp8T 6331), this protein is Elongation factor P.